The following is a 368-amino-acid chain: Nicotinate-nucleotide--dimethylbenzimidazole phosphoribosyltransferase (368 aa).

Glu-314 serves as the catalytic Proton acceptor. The interval 344–368 (DRADGADNSADSGASAGTVASDPTV) is disordered. Residues 349 to 360 (ADNSADSGASAG) show a composition bias toward low complexity.

It belongs to the CobT family.

The catalysed reaction is 5,6-dimethylbenzimidazole + nicotinate beta-D-ribonucleotide = alpha-ribazole 5'-phosphate + nicotinate + H(+). It functions in the pathway nucleoside biosynthesis; alpha-ribazole biosynthesis; alpha-ribazole from 5,6-dimethylbenzimidazole: step 1/2. In terms of biological role, catalyzes the synthesis of alpha-ribazole-5'-phosphate from nicotinate mononucleotide (NAMN) and 5,6-dimethylbenzimidazole (DMB). The protein is Nicotinate-nucleotide--dimethylbenzimidazole phosphoribosyltransferase of Corynebacterium efficiens (strain DSM 44549 / YS-314 / AJ 12310 / JCM 11189 / NBRC 100395).